The chain runs to 121 residues: Heme-degrading monooxygenase (121 aa).

An ABM domain is found at 2-101 (IIVTNTIKVE…EQREDRKGIV (100 aa)). N6 lines the Fe cation pocket. The disordered stretch occupies residues 76 to 98 (KSDSFKKAHGRTKDTREQREDRK). Basic and acidic residues predominate over residues 78 to 98 (DSFKKAHGRTKDTREQREDRK). H84 serves as a coordination point for heme.

It belongs to the antibiotic biosynthesis monooxygenase family. Heme-degrading monooxygenase IsdG subfamily. As to quaternary structure, homodimer.

Its subcellular location is the cytoplasm. The enzyme catalyses heme b + 3 reduced [NADPH--hemoprotein reductase] + 3 O2 = biliverdin IXalpha + CO + Fe(2+) + 3 oxidized [NADPH--hemoprotein reductase] + 3 H2O + H(+). Functionally, allows bacterial pathogens to use the host heme as an iron source. Catalyzes the oxidative degradation of the heme macrocyclic porphyrin ring to the biliverdin in the presence of a suitable electron donor such as ascorbate or NADPH--cytochrome P450 reductase, with subsequent release of free iron. The polypeptide is Heme-degrading monooxygenase (Listeria innocua serovar 6a (strain ATCC BAA-680 / CLIP 11262)).